A 337-amino-acid chain; its full sequence is tRNA N6-adenosine threonylcarbamoyltransferase (337 aa).

His114 and His118 together coordinate Fe cation. Substrate contacts are provided by residues 136-140 (LVSGG), Asp169, Gly182, Asp186, and Asn275. Asp301 serves as a coordination point for Fe cation.

The protein belongs to the KAE1 / TsaD family. The cofactor is Fe(2+).

Its subcellular location is the cytoplasm. It catalyses the reaction L-threonylcarbamoyladenylate + adenosine(37) in tRNA = N(6)-L-threonylcarbamoyladenosine(37) in tRNA + AMP + H(+). Its function is as follows. Required for the formation of a threonylcarbamoyl group on adenosine at position 37 (t(6)A37) in tRNAs that read codons beginning with adenine. Is involved in the transfer of the threonylcarbamoyl moiety of threonylcarbamoyl-AMP (TC-AMP) to the N6 group of A37, together with TsaE and TsaB. TsaD likely plays a direct catalytic role in this reaction. The polypeptide is tRNA N6-adenosine threonylcarbamoyltransferase (Streptococcus thermophilus (strain CNRZ 1066)).